An 853-amino-acid chain; its full sequence is Protein translocase subunit SecA 1 (853 aa).

ATP-binding positions include Gln-85, Gly-103 to Thr-107, and Asp-492.

Belongs to the SecA family. In terms of assembly, monomer and homodimer. Part of the essential Sec protein translocation apparatus which comprises SecA, SecYEG and auxiliary proteins SecDF. Other proteins may also be involved.

The protein resides in the cell membrane. It is found in the cytoplasm. The catalysed reaction is ATP + H2O + cellular proteinSide 1 = ADP + phosphate + cellular proteinSide 2.. Part of the Sec protein translocase complex. Interacts with the SecYEG preprotein conducting channel. Has a central role in coupling the hydrolysis of ATP to the transfer of proteins into and across the cell membrane, serving as an ATP-driven molecular motor driving the stepwise translocation of polypeptide chains across the membrane. The sequence is that of Protein translocase subunit SecA 1 from Corynebacterium diphtheriae (strain ATCC 700971 / NCTC 13129 / Biotype gravis).